We begin with the raw amino-acid sequence, 450 residues long: ATP-dependent protease ATPase subunit HslU (450 aa).

ATP-binding positions include V29, 71-76 (GVGKTE), D261, E328, and R400.

It belongs to the ClpX chaperone family. HslU subfamily. In terms of assembly, a double ring-shaped homohexamer of HslV is capped on each side by a ring-shaped HslU homohexamer. The assembly of the HslU/HslV complex is dependent on binding of ATP.

It is found in the cytoplasm. In terms of biological role, ATPase subunit of a proteasome-like degradation complex; this subunit has chaperone activity. The binding of ATP and its subsequent hydrolysis by HslU are essential for unfolding of protein substrates subsequently hydrolyzed by HslV. HslU recognizes the N-terminal part of its protein substrates and unfolds these before they are guided to HslV for hydrolysis. This is ATP-dependent protease ATPase subunit HslU from Rickettsia peacockii (strain Rustic).